The sequence spans 446 residues: Glucose-1-phosphate adenylyltransferase (446 aa).

Residues Tyr119, Gly184, Glu199 to Lys200, and Ser217 contribute to the alpha-D-glucose 1-phosphate site.

Belongs to the bacterial/plant glucose-1-phosphate adenylyltransferase family. Homotetramer.

It catalyses the reaction alpha-D-glucose 1-phosphate + ATP + H(+) = ADP-alpha-D-glucose + diphosphate. It participates in glycan biosynthesis; glycogen biosynthesis. In terms of biological role, involved in the biosynthesis of ADP-glucose, a building block required for the elongation reactions to produce glycogen. Catalyzes the reaction between ATP and alpha-D-glucose 1-phosphate (G1P) to produce pyrophosphate and ADP-Glc. This Rhodopirellula baltica (strain DSM 10527 / NCIMB 13988 / SH1) protein is Glucose-1-phosphate adenylyltransferase.